The sequence spans 66 residues: Trypsin inhibitor (66 aa).

Cystine bridges form between cysteine 5-cysteine 28, cysteine 16-cysteine 44, cysteine 19-cysteine 58, cysteine 21-cysteine 38, and cysteine 43-cysteine 64.

The protein localises to the secreted. In Ascaris suum (Pig roundworm), this protein is Trypsin inhibitor.